Reading from the N-terminus, the 238-residue chain is MGRGKVELKRIENKINRQVTFAKRRNGLLKKAYELSILCEAEVALIIFSNRGKLYEFCSTSSMSDTLERYHRCSYGDLETGQSSKDSQNNYQEYMKLKARVEVLQQSQRHILGEDLGQLNTKDLEQLERQLDSSLRLIRSRRTQNMLDQLSDLQQKEQSLLEINRSLKTKLEENSVAHWHITGEQNVQFRQQPAQSEGFFQPLQCNTNIVPNRYNVAPLDSIEPSTQNATGILPGWML.

The MADS-box domain occupies 1–61 (MGRGKVELKR…GKLYEFCSTS (61 aa)). One can recognise a K-box domain in the interval 87-177 (SQNNYQEYMK…KTKLEENSVA (91 aa)).

Its subcellular location is the nucleus. Functionally, probable MADS-box transcription factor that functions with J2 and EJ2 in meristem maturation. In Solanum lycopersicum (Tomato), this protein is MADS-box protein 04g005320.